A 283-amino-acid polypeptide reads, in one-letter code: Probable endonuclease 4 (283 aa).

Zn(2+) contacts are provided by His-67, His-107, Glu-144, Asp-178, His-181, His-215, Asp-228, His-230, and Glu-260.

This sequence belongs to the AP endonuclease 2 family. It depends on Zn(2+) as a cofactor.

The catalysed reaction is Endonucleolytic cleavage to 5'-phosphooligonucleotide end-products.. Functionally, endonuclease IV plays a role in DNA repair. It cleaves phosphodiester bonds at apurinic or apyrimidinic (AP) sites, generating a 3'-hydroxyl group and a 5'-terminal sugar phosphate. This chain is Probable endonuclease 4, found in Geobacter sp. (strain M21).